The following is a 331-amino-acid chain: MKQILYKLFEHQYLGRDEARTILQNIAQGKYNDAQVASLITVFLMRNISVEELCGFRDALLEMRVPVDLSEFAPIDIVGTGGDGKNTFNISTAACFTVAGAGFPVVKHGNYGATSVSGASNVMEQHGVKFTDHTDRLRRSMEKCNIAYLHAPLFNPALKAVAPIRKALAVRTFFNMLGPLVNPVIPTYQLLGVYNLPLLRLYTYTYQESATRFAVVHSLDGYDEISLTDEFKVATCGNEKIYTPESLGFNRCRESELDGGNTPEDATRIFDAVMEGTATEAQKNVVIVNAAFAIRVICPEKPIEECIALARESLESGKARETLKKFVELNG.

5-phospho-alpha-D-ribose 1-diphosphate-binding positions include Gly79, 82 to 83, Thr87, 89 to 92, 107 to 115, and Ala119; these read GD, NIST, and KHGNYGATS. Position 79 (Gly79) interacts with anthranilate. Ser91 contacts Mg(2+). Residue Asn110 coordinates anthranilate. Residue Arg165 participates in anthranilate binding. Positions 223 and 224 each coordinate Mg(2+).

Belongs to the anthranilate phosphoribosyltransferase family. Homodimer. It depends on Mg(2+) as a cofactor.

The enzyme catalyses N-(5-phospho-beta-D-ribosyl)anthranilate + diphosphate = 5-phospho-alpha-D-ribose 1-diphosphate + anthranilate. Its pathway is amino-acid biosynthesis; L-tryptophan biosynthesis; L-tryptophan from chorismate: step 2/5. Its function is as follows. Catalyzes the transfer of the phosphoribosyl group of 5-phosphorylribose-1-pyrophosphate (PRPP) to anthranilate to yield N-(5'-phosphoribosyl)-anthranilate (PRA). The chain is Anthranilate phosphoribosyltransferase from Bacteroides fragilis (strain ATCC 25285 / DSM 2151 / CCUG 4856 / JCM 11019 / LMG 10263 / NCTC 9343 / Onslow / VPI 2553 / EN-2).